We begin with the raw amino-acid sequence, 631 residues long: uncharacterized protein (631 aa).

The next 9 helical transmembrane spans lie at 42 to 62 (VLVG…IGGF), 76 to 96 (ALKL…GTLL), 106 to 128 (VLGL…GPAP), 152 to 172 (AGLT…GWLW), 344 to 364 (ALKY…FGFA), 366 to 386 (SYWI…VFTL), 398 to 418 (IGVI…YIAF), 429 to 449 (MLIV…ALVI), and 464 to 484 (IARL…TMLL).

The protein belongs to the YccS/YhfK family.

Its subcellular location is the cell membrane. This is an uncharacterized protein from Bacillus subtilis (strain 168).